We begin with the raw amino-acid sequence, 611 residues long: Chaperone protein HtpG (611 aa).

The tract at residues 1–326 (MSETLERHAF…TEDLPLNVSR (326 aa)) is a; substrate-binding. The interval 327–536 (EMLQATPVLA…SGGPDLQMQR (210 aa)) is b. The interval 537–611 (LLRRAGRGFG…RVAAALAAQA (75 aa)) is c.

It belongs to the heat shock protein 90 family. In terms of assembly, homodimer.

Its subcellular location is the cytoplasm. Functionally, molecular chaperone. Has ATPase activity. The protein is Chaperone protein HtpG of Methylobacterium sp. (strain 4-46).